Consider the following 1349-residue polypeptide: Membrane-associated phosphatidylinositol transfer protein 2 (1349 aa).

A disordered region spans residues 262–344 (EDGEEATELV…RDSDESSDDE (83 aa)). The span at 302–322 (KQWSTSSKSSRSSKRGASPSR) shows a compositional bias: low complexity. Phosphoserine is present on residues Ser-337, Ser-341, Ser-368, and Ser-589. Residues 618–631 (GGGGGSSGGGGSSG) show a composition bias toward gly residues. Residues 618 to 671 (GGGGGSSGGGGSSGGSSLESSRHLSRSNVDIPRSNGTEDPKRQLPRKRSDSSTY) form a disordered region. A Phosphoserine modification is found at Ser-644. Over residues 653–667 (GTEDPKRQLPRKRSD) the composition is skewed to basic and acidic residues. Ser-700, Ser-701, and Ser-702 each carry phosphoserine. The 249-residue stretch at 715-963 (FDFEITDLFL…VSFLLRQVMR (249 aa)) folds into the DDHD domain. Position 828 is an omega-N-methylarginine (Arg-828). The tract at residues 876–900 (LPAPSPTTPGPHPPARKASPGLERA) is disordered. Over residues 878–888 (APSPTTPGPHP) the composition is skewed to pro residues. Ser-1277 carries the post-translational modification Phosphoserine. Residues 1296–1326 (TISAQPSGPSHRHERTQSQADGEQRGQRSMS) form a disordered region.

The protein belongs to the PtdIns transfer protein family. PI transfer class IIA subfamily. As to quaternary structure, interacts with PTK2B via its C-terminus. Interacts with CPNE4 (via VWFA domain). In terms of tissue distribution, highly expressed in brain, heart, ovary, testis and thymus. Detected in small intestine, prostate, pancreas, skeletal muscle, liver, colon and placenta.

Its subcellular location is the endomembrane system. Its function is as follows. Catalyzes the transfer of phosphatidylinositol and phosphatidylcholine between membranes (in vitro). Binds calcium ions. The polypeptide is Membrane-associated phosphatidylinositol transfer protein 2 (PITPNM2) (Homo sapiens (Human)).